The primary structure comprises 270 residues: 4-hydroxy-tetrahydrodipicolinate reductase (270 aa).

NAD(+) contacts are provided by residues 8–13 (GALGRM), Asp34, 102–104 (GTT), and 128–131 (SQNY). His160 functions as the Proton donor/acceptor in the catalytic mechanism. (S)-2,3,4,5-tetrahydrodipicolinate is bound at residue His161. The active-site Proton donor is the Lys164. 170–171 (GT) is a (S)-2,3,4,5-tetrahydrodipicolinate binding site.

The protein belongs to the DapB family.

The protein localises to the cytoplasm. It catalyses the reaction (S)-2,3,4,5-tetrahydrodipicolinate + NAD(+) + H2O = (2S,4S)-4-hydroxy-2,3,4,5-tetrahydrodipicolinate + NADH + H(+). The enzyme catalyses (S)-2,3,4,5-tetrahydrodipicolinate + NADP(+) + H2O = (2S,4S)-4-hydroxy-2,3,4,5-tetrahydrodipicolinate + NADPH + H(+). Its pathway is amino-acid biosynthesis; L-lysine biosynthesis via DAP pathway; (S)-tetrahydrodipicolinate from L-aspartate: step 4/4. Catalyzes the conversion of 4-hydroxy-tetrahydrodipicolinate (HTPA) to tetrahydrodipicolinate. The chain is 4-hydroxy-tetrahydrodipicolinate reductase from Methanococcus maripaludis (strain DSM 14266 / JCM 13030 / NBRC 101832 / S2 / LL).